Reading from the N-terminus, the 319-residue chain is Acetyl-coenzyme A carboxylase carboxyl transferase subunit alpha (319 aa).

One can recognise a CoA carboxyltransferase C-terminal domain in the interval 35–292; the sequence is EISKLMRRLV…KKTIAEALAE (258 aa).

The protein belongs to the AccA family. As to quaternary structure, acetyl-CoA carboxylase is a heterohexamer composed of biotin carboxyl carrier protein (AccB), biotin carboxylase (AccC) and two subunits each of ACCase subunit alpha (AccA) and ACCase subunit beta (AccD).

Its subcellular location is the cytoplasm. It carries out the reaction N(6)-carboxybiotinyl-L-lysyl-[protein] + acetyl-CoA = N(6)-biotinyl-L-lysyl-[protein] + malonyl-CoA. It participates in lipid metabolism; malonyl-CoA biosynthesis; malonyl-CoA from acetyl-CoA: step 1/1. In terms of biological role, component of the acetyl coenzyme A carboxylase (ACC) complex. First, biotin carboxylase catalyzes the carboxylation of biotin on its carrier protein (BCCP) and then the CO(2) group is transferred by the carboxyltransferase to acetyl-CoA to form malonyl-CoA. This is Acetyl-coenzyme A carboxylase carboxyl transferase subunit alpha from Desulfitobacterium hafniense (strain DSM 10664 / DCB-2).